Here is a 121-residue protein sequence, read N- to C-terminus: Pancreatic progenitor cell differentiation and proliferation factor (121 aa).

Disordered stretches follow at residues 22–47 (GSTS…PGLQ) and 101–121 (SRQL…PPPS). Over residues 23 to 33 (STSSNSSCGSS) the composition is skewed to low complexity. Residues 101-110 (SRQLSESSDS) are compositionally biased toward polar residues.

This sequence belongs to the PPDPF family.

Probable regulator of exocrine pancreas development. The sequence is that of Pancreatic progenitor cell differentiation and proliferation factor (ppdpf) from Salmo salar (Atlantic salmon).